Here is a 150-residue protein sequence, read N- to C-terminus: Small ribosomal subunit protein uS13 (150 aa).

This sequence belongs to the universal ribosomal protein uS13 family. Part of the 30S ribosomal subunit. Forms a loose heterodimer with protein S19. Forms two bridges to the 50S subunit in the 70S ribosome.

Its function is as follows. Located at the top of the head of the 30S subunit, it contacts several helices of the 16S rRNA. In the 70S ribosome it contacts the 23S rRNA (bridge B1a) and protein L5 of the 50S subunit (bridge B1b), connecting the 2 subunits; these bridges are implicated in subunit movement. The chain is Small ribosomal subunit protein uS13 from Aeropyrum pernix (strain ATCC 700893 / DSM 11879 / JCM 9820 / NBRC 100138 / K1).